Here is a 241-residue protein sequence, read N- to C-terminus: 3-oxoacyl-[acyl-carrier-protein] reductase FabG (241 aa).

NADP(+) contacts are provided by residues 13–16 (GASS), Ser-38, 57–58 (EV), and Asn-83. Ser-135 contributes to the substrate binding site. Tyr-148 serves as the catalytic Proton acceptor. NADP(+)-binding positions include 148-152 (YCASK) and Ile-181.

It belongs to the short-chain dehydrogenases/reductases (SDR) family. As to quaternary structure, homotetramer.

The enzyme catalyses a (3R)-hydroxyacyl-[ACP] + NADP(+) = a 3-oxoacyl-[ACP] + NADPH + H(+). The protein operates within lipid metabolism; fatty acid biosynthesis. Functionally, catalyzes the NADPH-dependent reduction of beta-ketoacyl-ACP substrates to beta-hydroxyacyl-ACP products, the first reductive step in the elongation cycle of fatty acid biosynthesis. The protein is 3-oxoacyl-[acyl-carrier-protein] reductase FabG (fabG) of Rickettsia prowazekii (strain Madrid E).